We begin with the raw amino-acid sequence, 274 residues long: Large ribosomal subunit protein uL2 (274 aa).

The disordered stretch occupies residues 224–274 (VAMNPVDHPHGGGEGRTSGGRHPVTPWGIPTKGYKTRKNKRSNKLIVQKRK). Basic residues predominate over residues 257–274 (YKTRKNKRSNKLIVQKRK).

The protein belongs to the universal ribosomal protein uL2 family. Part of the 50S ribosomal subunit. Forms a bridge to the 30S subunit in the 70S ribosome.

In terms of biological role, one of the primary rRNA binding proteins. Required for association of the 30S and 50S subunits to form the 70S ribosome, for tRNA binding and peptide bond formation. It has been suggested to have peptidyltransferase activity; this is somewhat controversial. Makes several contacts with the 16S rRNA in the 70S ribosome. In Francisella philomiragia subsp. philomiragia (strain ATCC 25017 / CCUG 19701 / FSC 153 / O#319-036), this protein is Large ribosomal subunit protein uL2.